The following is a 323-amino-acid chain: Cysteine synthase A (323 aa).

2 residues coordinate hydrogen sulfide: N8 and R35. At K42 the chain carries N6-(pyridoxal phosphate)lysine. Pyridoxal 5'-phosphate-binding positions include N72 and 177–181 (GTGGT). L269 is a hydrogen sulfide binding site. S273 is a binding site for pyridoxal 5'-phosphate.

It belongs to the cysteine synthase/cystathionine beta-synthase family. In terms of assembly, homodimer. Requires pyridoxal 5'-phosphate as cofactor.

It catalyses the reaction O-acetyl-L-serine + hydrogen sulfide = L-cysteine + acetate. It functions in the pathway amino-acid biosynthesis; L-cysteine biosynthesis; L-cysteine from L-serine: step 2/2. Two cysteine synthase enzymes are found. Both catalyze the same reaction. Cysteine synthase B can also use thiosulfate in place of sulfide to give cysteine thiosulfonate as a product. The chain is Cysteine synthase A (cysK) from Salmonella typhi.